A 404-amino-acid chain; its full sequence is Cysteine desulfurase IscS (404 aa).

Residues 75–76, Asn-155, Gln-183, and 203–205 contribute to the pyridoxal 5'-phosphate site; these read AT and SAH. Lys-206 is modified (N6-(pyridoxal phosphate)lysine). Thr-243 serves as a coordination point for pyridoxal 5'-phosphate. The Cysteine persulfide intermediate role is filled by Cys-328. Cys-328 contacts [2Fe-2S] cluster.

It belongs to the class-V pyridoxal-phosphate-dependent aminotransferase family. NifS/IscS subfamily. As to quaternary structure, homodimer. Forms a heterotetramer with IscU, interacts with other sulfur acceptors. Pyridoxal 5'-phosphate is required as a cofactor.

It is found in the cytoplasm. It catalyses the reaction (sulfur carrier)-H + L-cysteine = (sulfur carrier)-SH + L-alanine. It participates in cofactor biosynthesis; iron-sulfur cluster biosynthesis. Master enzyme that delivers sulfur to a number of partners involved in Fe-S cluster assembly, tRNA modification or cofactor biosynthesis. Catalyzes the removal of elemental sulfur atoms from cysteine to produce alanine. Functions as a sulfur delivery protein for Fe-S cluster synthesis onto IscU, an Fe-S scaffold assembly protein, as well as other S acceptor proteins. The polypeptide is Cysteine desulfurase IscS (Vibrio cholerae serotype O1 (strain ATCC 39541 / Classical Ogawa 395 / O395)).